A 79-amino-acid polypeptide reads, in one-letter code: Acyl carrier protein (79 aa).

One can recognise a Carrier domain in the interval 2-77 (ENIEQRVKKI…QAIDYVTAHL (76 aa)). Residue Ser37 is modified to O-(pantetheine 4'-phosphoryl)serine.

It belongs to the acyl carrier protein (ACP) family. Post-translationally, 4'-phosphopantetheine is transferred from CoA to a specific serine of apo-ACP by AcpS. This modification is essential for activity because fatty acids are bound in thioester linkage to the sulfhydryl of the prosthetic group.

The protein localises to the cytoplasm. The protein operates within lipid metabolism; fatty acid biosynthesis. Functionally, carrier of the growing fatty acid chain in fatty acid biosynthesis. This is Acyl carrier protein from Aromatoleum aromaticum (strain DSM 19018 / LMG 30748 / EbN1) (Azoarcus sp. (strain EbN1)).